Consider the following 1146-residue polypeptide: ATP-dependent helicase/deoxyribonuclease subunit B (1146 aa).

Residues 1–280 (MSLRFIYGRA…LNSKPLFRFS (280 aa)) form the UvrD-like helicase ATP-binding domain. ATP is bound at residue 8 to 15 (GRAGSGKT). The 309-residue stretch at 276–584 (LFRFSQSPEL…LVGSLERSRS (309 aa)) folds into the UvrD-like helicase C-terminal domain. [4Fe-4S] cluster is bound by residues Cys-786, Cys-1105, Cys-1108, and Cys-1114.

The protein belongs to the helicase family. AddB/RexB type 1 subfamily. Heterodimer of AddA and AddB. Mg(2+) serves as cofactor. [4Fe-4S] cluster is required as a cofactor.

Functionally, the heterodimer acts as both an ATP-dependent DNA helicase and an ATP-dependent, dual-direction single-stranded exonuclease. Recognizes the chi site generating a DNA molecule suitable for the initiation of homologous recombination. The AddB subunit has 5' -&gt; 3' nuclease activity but not helicase activity. The polypeptide is ATP-dependent helicase/deoxyribonuclease subunit B (Acetivibrio thermocellus (strain ATCC 27405 / DSM 1237 / JCM 9322 / NBRC 103400 / NCIMB 10682 / NRRL B-4536 / VPI 7372) (Clostridium thermocellum)).